A 285-amino-acid polypeptide reads, in one-letter code: Flagellar filament core protein flaB2 (285 aa).

Belongs to the bacterial flagellin family. In terms of assembly, the flagellum consists of an outer layer composed of two sheath proteins, flaA1 (44 kDa) and flaA2 (35 kDa) around a core that contains three proteins flaB1 (37 kDa), flaB2 (34 kDa) and flaB3 (32 kDa).

It localises to the periplasmic flagellum. Its subcellular location is the periplasm. Its function is as follows. Component of the core of the flagella. The chain is Flagellar filament core protein flaB2 (flaB2) from Brachyspira hyodysenteriae (Treponema hyodysenteriae).